The primary structure comprises 380 residues: MKIIGIIAEYNPFHNGHLYQIEKVKEIYPESIIIVAMSGNFLQRGEPAIVDKWVRAKQALLNGVDVVVEIPIAGCVQPADRFAENGVRILNNMGCEELFFGAEHAEYDFMTYAQLVQNLDSTEFSKKNISYAEAFQEAVAAKIGHNIDSPNDVLGLAYAKANLKFGKKLKLNPISRNVAGYHDKSLSPDSNIASATAIRKVLFSKDHNLVDKYLPSYQDLKDEKYISWDDFWPFLRYKLISSDIDELANIYGMAEGIQYRMKKKALELKVEATFDEWLKAVKSKRFTYTRLTRLSVATLVGMKVNDVSLYNKFPYVHLLGFTKNGQKALNIMKKNSEIPLLAKISQQDKDDFYHVDYRAGKIYQSQNYKEQDLKRAPLIF.

ATP contacts are provided by residues 7–20, Gly101, Asn151, and Arg176; that span reads IAEY…HLYQ.

Belongs to the TmcAL family.

Its subcellular location is the cytoplasm. It carries out the reaction cytidine(34) in elongator tRNA(Met) + acetate + ATP = N(4)-acetylcytidine(34) in elongator tRNA(Met) + AMP + diphosphate. Functionally, catalyzes the formation of N(4)-acetylcytidine (ac(4)C) at the wobble position of elongator tRNA(Met), using acetate and ATP as substrates. First activates an acetate ion to form acetyladenylate (Ac-AMP) and then transfers the acetyl group to tRNA to form ac(4)C34. The sequence is that of tRNA(Met) cytidine acetate ligase from Ligilactobacillus salivarius (strain UCC118) (Lactobacillus salivarius).